A 1081-amino-acid polypeptide reads, in one-letter code: MSAAPVQDKDTLSNAERAKNVNGLLQVLMDINTLNGGSSDTADKIRIHAKNFEAALFAKSSSKKEYMDSMNEKVAVMRNTYNTRKNAVTAAAANNNIKPVEQHHINNLKNSGNSANNMNVNMNLNPQMFLNQQAQARQQVAQQLRNQQQQQQQQQQQQRRQLTPQQQQLVNQMKVAPIPKQLLQRIPNIPPNINTWQQVTALAQQKLLTPQDMEAAKEVYKIHQQLLFKARLQQQQAQAQAQANNNNNGLPQNGNINNNINIPQQQQMQPPNSSANNNPLQQQSSQNTVPNVLNQINQIFSPEEQRSLLQEAIETCKNFEKTQLGSTMTEPVKQSFIRKYINQKALRKIQALRDVKNNNNANNNGSNLQRAQNVPMNIIQQQQQQNTNNNDTIATSATPNAAAFSQQQNASSKLYQMQQQQQAQAQAQAQAQAQAQAQAQAQAAQAAQAQAQAQAQAQAQAQAQAQAQAQAQAQAQAQAQAHAQHQPSQQPQQAQQQPNPLHGLTPTAKDVEVIKQLSLDASKTNLRLTDVTNSLSNEEKEKIKMKLKQGQKLFVQVSNFAPQVYIITKNENFLKEVFQLRIFVKEILEKCAEGIFVVKLDTVDRLIIKYQKYWESMRIQILRRQAILRQQQQMANNNGNPGTTSTGNNNNIATQQNMQQSLQQMQHLQQLKMQQQQQQQQQQQQQQQQQQQQQQQHIYPSSTPGVANYSAMANAPGNNIPYMNHKNTSSMDFLNSMENTPKVPVSAAATPSLNKTINGKVNGRTKSNTIPVTSIPSTNKKLSISNAASQQPTPRSASNTAKSTPNTNPSPLKTQTKNGTPNPNNMKTVQSPMGAQPSYNSAIIENAFRKEELLLKDLEIRKLEISSRFKHRQEIFKDSPMDLFMSTLGDCLGIKDEEMLTSCTIPKAVVDHINGSGKRKPTKAAQRARDQDSIDISIKDNKLVMKSKFNKSNRSYSIALSNVAAIFKGIGGNFKDLSTLVHSSSPSTSSNMDVGNPRKRKASVLEISPQDSIASVLSPDSNIMSDSKKIKVDSPDDPFMTKSGATTSEKQEVTNEAPFLTSGTSSEQFNVWDWNNWTSAT.

Serine 2 carries the N-acetylserine modification. Positions 25–49 (LQVLMDINTLNGGSSDTADKIRIHA) are interaction with GCN4. Positions 238-286 (QAQAQANNNNNGLPQNGNINNNINIPQQQQMQPPNSSANNNPLQQQSSQ) are disordered. Serine 335 is modified (phosphoserine). A run of 11 repeats spans residues 422–423 (QA), 424–425 (QA), 426–427 (QA), 428–429 (QA), 430–431 (QA), 432–433 (QA), 434–435 (QA), 436–437 (QA), 438–439 (QA), 440–441 (QA), and 442–443 (QA). Residues 422–481 (QAQAQAQAQAQAQAQAQAQAQAAQAAQAQAQAQAQAQAQAQAQAQAQAQAQAQAQAQAQA) form a 30 X 2 AA approximate tandem repeats of Q-A region. Residues 444–445 (AQ) form a 12; approximate repeat. Residues 446–447 (AA) form a 13; approximate repeat. A run of 17 repeats spans residues 448 to 449 (QA), 450 to 451 (QA), 452 to 453 (QA), 454 to 455 (QA), 456 to 457 (QA), 458 to 459 (QA), 460 to 461 (QA), 462 to 463 (QA), 464 to 465 (QA), 466 to 467 (QA), 468 to 469 (QA), 470 to 471 (QA), 472 to 473 (QA), 474 to 475 (QA), 476 to 477 (QA), 478 to 479 (QA), and 480 to 481 (QA). The span at 476–497 (QAQAQAHAQHQPSQQPQQAQQQ) shows a compositional bias: low complexity. 2 disordered regions span residues 476–505 (QAQA…HGLT) and 692–712 (QQQQ…YSAM). Residues serine 736, serine 752, serine 783, serine 785, and serine 789 each carry the phosphoserine modification. Positions 744 to 836 (PVSAAATPSL…KTVQSPMGAQ (93 aa)) are disordered. Polar residues predominate over residues 749 to 836 (ATPSLNKTIN…KTVQSPMGAQ (88 aa)). A Phosphothreonine modification is found at threonine 793. A phosphoserine mark is found at serine 831, serine 1003, serine 1008, serine 1018, and serine 1034. Residues 1026–1055 (DSKKIKVDSPDDPFMTKSGATTSEKQEVTN) form a disordered region.

Belongs to the Mediator complex subunit 15 family. In terms of assembly, component of the Mediator complex, which is composed of at least 21 subunits that form three structurally distinct submodules. The Mediator head module contains MED6, MED8, MED11, SRB4/MED17, SRB5/MED18, ROX3/MED19, SRB2/MED20 and SRB6/MED22, the middle module contains MED1, MED4, NUT1/MED5, MED7, CSE2/MED9, NUT2/MED10, SRB7/MED21 and SOH1/MED31, and the tail module contains MED2, PGD1/MED3, RGR1/MED14, GAL11/MED15 and SIN4/MED16. The head and the middle modules interact directly with RNA polymerase II, whereas the elongated tail module interacts with gene-specific regulatory proteins. GAL11/MED15 interacts with the activator GAL4; the interaction is direct. GAL11/MED15 interacts (via multiple regions) with the activator GCN4; the interaction is direct.

The protein resides in the nucleus. Functionally, component of the Mediator complex, a coactivator involved in the regulated transcription of nearly all RNA polymerase II-dependent genes. Mediator functions as a bridge to convey information from gene-specific regulatory proteins to the basal RNA polymerase II transcription machinery. The Mediator complex, having a compact conformation in its free form, is recruited to promoters by direct interactions with regulatory proteins and serves for the assembly of a functional pre-initiation complex with RNA polymerase II and the general transcription factors. The Mediator complex unfolds to an extended conformation and partially surrounds RNA polymerase II, specifically interacting with the unphosphorylated form of the C-terminal domain (CTD) of RNA polymerase II. The Mediator complex dissociates from the RNA polymerase II holoenzyme and stays at the promoter when transcriptional elongation begins. It has an important role in the negative regulation of Ty transcription. In Saccharomyces cerevisiae (strain ATCC 204508 / S288c) (Baker's yeast), this protein is Mediator of RNA polymerase II transcription subunit 15.